The sequence spans 454 residues: Notoamide E oxidase notB (454 aa).

Residues 15 to 35 (SPAELTVIIVGLGIAGLTAAI) form a helical membrane-spanning segment. Residues Glu48 and Gly61 each contribute to the FAD site. N-linked (GlcNAc...) asparagine glycosylation is present at Asn75. An FAD-binding site is contributed by Arg121. Catalysis depends on residues Arg199 and Tyr229. Residues Asp322 and Gly335 each contribute to the FAD site.

Belongs to the paxM FAD-dependent monooxygenase family. FAD is required as a cofactor.

Its subcellular location is the membrane. It carries out the reaction notoamide E + NADPH + O2 + H(+) = notoamide C + NADP(+) + H2O. The catalysed reaction is notoamide E + NADPH + O2 + H(+) = notoamide D + NADP(+) + H2O. It participates in alkaloid biosynthesis. Its function is as follows. FAD-dependent monooxygenase; part of the gene cluster that mediates the biosynthesis of notoamide, a fungal indole alkaloid that belongs to a family of natural products containing a characteristic bicyclo[2.2.2]diazaoctane core. The first step of notoamide biosynthesis involves coupling of L-proline and L-tryptophan by the bimodular NRPS notE, to produce cyclo-L-tryptophan-L-proline called brevianamide F. The reverse prenyltransferase notF then acts as a deoxybrevianamide E synthase and converts brevianamide F to deoxybrevianamide E via reverse prenylation at C-2 of the indole ring leading to the bicyclo[2.2.2]diazaoctane core. Deoxybrevianamide E is further hydroxylated at C-6 of the indole ring, likely catalyzed by the cytochrome P450 monooxygenase notG, to yield 6-hydroxy-deoxybrevianamide E. 6-hydroxy-deoxybrevianamide E is a specific substrate of the prenyltransferase notC for normal prenylation at C-7 to produce 6-hydroxy-7-prenyl-deoxybrevianamide, also called notoamide S. As the proposed pivotal branching point in notoamide biosynthesis, notoamide S can be diverted to notoamide E through an oxidative pyran ring closure putatively catalyzed by either notH cytochrome P450 monooxygenase or the notD FAD-linked oxidoreductase. This step would be followed by an indole 2,3-epoxidation-initiated pinacol-like rearrangement catalyzed by the notB FAD-dependent monooxygenase leading to the formation of notoamide C and notoamide D. On the other hand notoamide S is converted to notoamide T by notH (or notD), a bifunctional oxidase that also functions as the intramolecular Diels-Alderase responsible for generation of (+)-notoamide T. To generate antipodal (-)-notoaminide T, notH' (or notD') in Aspergillus versicolor is expected to catalyze a Diels-Alder reaction leading to the opposite stereochemistry. The remaining oxidoreductase notD (or notH) likely catalyzes the oxidative pyran ring formation to yield (+)-stephacidin A. The FAD-dependent monooxygenase notI is highly similar to notB and is predicted to catalyze a similar conversion from (+)-stephacidin A to (-)-notoamide B via the 2,3-epoxidation of (+)-stephacidin A followed by a pinacol-type rearrangement. Finally, it remains unclear which enzyme could be responsible for the final hydroxylation steps leading to notoamide A and sclerotiamide. The polypeptide is Notoamide E oxidase notB (Aspergillus sp. (strain MF297-2)).